We begin with the raw amino-acid sequence, 1434 residues long: DNA-directed RNA polymerase subunit beta (1434 aa).

This sequence belongs to the RNA polymerase beta chain family. The RNAP catalytic core consists of 2 alpha, 1 beta, 1 beta' and 1 omega subunit. When a sigma factor is associated with the core the holoenzyme is formed, which can initiate transcription.

It catalyses the reaction RNA(n) + a ribonucleoside 5'-triphosphate = RNA(n+1) + diphosphate. Its function is as follows. DNA-dependent RNA polymerase catalyzes the transcription of DNA into RNA using the four ribonucleoside triphosphates as substrates. This chain is DNA-directed RNA polymerase subunit beta, found in Ureaplasma parvum serovar 3 (strain ATCC 700970).